Reading from the N-terminus, the 156-residue chain is Arginine repressor (156 aa).

This sequence belongs to the ArgR family.

The protein resides in the cytoplasm. It functions in the pathway amino-acid biosynthesis; L-arginine biosynthesis [regulation]. Regulates arginine biosynthesis genes. This chain is Arginine repressor, found in Aliivibrio fischeri (strain ATCC 700601 / ES114) (Vibrio fischeri).